The following is a 401-amino-acid chain: Chromatin modification-related protein EAF3 (401 aa).

Positions 13 to 98 constitute a Tudor-knot domain; that stretch reads RCLAFHGPLM…DEWVGYDRIR (86 aa). Positions 39–53 are enriched in polar residues; it reads TSIPNDKPGGSSQAT. Disordered regions lie at residues 39–65 and 117–210; these read TSIP…GEDE and EAKK…NMLH. Composition is skewed to basic and acidic residues over residues 54–63 and 117–126; these read KEIKPQKLGE and EAKKSLLEQQ. Residues 153–190 are compositionally biased toward low complexity; the sequence is SISKSTSQSFLTSSVSGRKSGRSSANSLHPGSSLRSSS. The residue at position 201 (serine 201) is a Phosphoserine. Residues 216–399 form the MRG domain; it reads PTPKISLQIP…TSSQYEGVAL (184 aa).

The protein belongs to the MRG family. Component of the NuA4 histone acetyltransferase complex composed of at least ACT1, ARP4, YAF9, VID21, SWC4, EAF3, EAF5, EAF6, EAF7, EPL1, ESA1, TRA1 and YNG2.

It is found in the nucleus. In terms of biological role, component of the NuA4 histone acetyltransferase complex which is involved in transcriptional activation of selected genes principally by acetylation of nucleosomal histone H4 and H2A. The NuA4 complex is also involved in DNA repair. This chain is Chromatin modification-related protein EAF3 (EAF3), found in Saccharomyces cerevisiae (strain ATCC 204508 / S288c) (Baker's yeast).